The primary structure comprises 279 residues: Elongation factor Ts (279 aa).

The interval 80 to 83 is involved in Mg(2+) ion dislocation from EF-Tu; the sequence is TDFV.

It belongs to the EF-Ts family.

It localises to the cytoplasm. Its function is as follows. Associates with the EF-Tu.GDP complex and induces the exchange of GDP to GTP. It remains bound to the aminoacyl-tRNA.EF-Tu.GTP complex up to the GTP hydrolysis stage on the ribosome. This Borreliella afzelii (strain PKo) (Borrelia afzelii) protein is Elongation factor Ts.